A 404-amino-acid chain; its full sequence is MDTQAFKRSLHHSDRYNRRGFESPTKRAQALEKAYQSNLIGSIRDNGYLFEHGRLRVKLAEAFGFCWGVERAVAMAYETRRHYPKESIWITNEIIHNPSVNDHLRNMNVRFISAEKGIKNFSSVQEGDVVILPAFGATVQEMKLLHERGCHIIDTTCPWVSKVWHTVEKHKKHEFTSIIHGKVKHEETLATSSFAGTYLVVLDLEEAQYVANYILGKGDREEFLKRFSKASSQGFDPDRDLQRLGVANQTTMLKSETEEIGRLFEKTMLRKYGPAELTEHFLAFNTICDATEERQDAMFSLVDEPLDLLVVIGGFNSSNTTHLQEIAISRGIRSFHIDTPERIGDQENTITHKPLGDDLITEKNFLPEGNISVGITSGASTPDRVVEHVIHKLINLSEEKAFVD.

C66 is a [4Fe-4S] cluster binding site. H96 contributes to the (2E)-4-hydroxy-3-methylbut-2-enyl diphosphate binding site. Residue H96 coordinates dimethylallyl diphosphate. H96 serves as a coordination point for isopentenyl diphosphate. Position 157 (C157) interacts with [4Fe-4S] cluster. H185 contacts (2E)-4-hydroxy-3-methylbut-2-enyl diphosphate. Residue H185 coordinates dimethylallyl diphosphate. An isopentenyl diphosphate-binding site is contributed by H185. E187 acts as the Proton donor in catalysis. Residue T250 participates in (2E)-4-hydroxy-3-methylbut-2-enyl diphosphate binding. Position 288 (C288) interacts with [4Fe-4S] cluster. (2E)-4-hydroxy-3-methylbut-2-enyl diphosphate contacts are provided by S317, S318, N319, and S380. Dimethylallyl diphosphate contacts are provided by S317, S318, N319, and S380. The isopentenyl diphosphate site is built by S317, S318, N319, and S380.

The protein belongs to the IspH family. The cofactor is [4Fe-4S] cluster.

The enzyme catalyses isopentenyl diphosphate + 2 oxidized [2Fe-2S]-[ferredoxin] + H2O = (2E)-4-hydroxy-3-methylbut-2-enyl diphosphate + 2 reduced [2Fe-2S]-[ferredoxin] + 2 H(+). It catalyses the reaction dimethylallyl diphosphate + 2 oxidized [2Fe-2S]-[ferredoxin] + H2O = (2E)-4-hydroxy-3-methylbut-2-enyl diphosphate + 2 reduced [2Fe-2S]-[ferredoxin] + 2 H(+). The protein operates within isoprenoid biosynthesis; dimethylallyl diphosphate biosynthesis; dimethylallyl diphosphate from (2E)-4-hydroxy-3-methylbutenyl diphosphate: step 1/1. It functions in the pathway isoprenoid biosynthesis; isopentenyl diphosphate biosynthesis via DXP pathway; isopentenyl diphosphate from 1-deoxy-D-xylulose 5-phosphate: step 6/6. Functionally, catalyzes the conversion of 1-hydroxy-2-methyl-2-(E)-butenyl 4-diphosphate (HMBPP) into a mixture of isopentenyl diphosphate (IPP) and dimethylallyl diphosphate (DMAPP). Acts in the terminal step of the DOXP/MEP pathway for isoprenoid precursor biosynthesis. This Prochlorococcus marinus (strain MIT 9211) protein is 4-hydroxy-3-methylbut-2-enyl diphosphate reductase.